Reading from the N-terminus, the 618-residue chain is DNA mismatch repair protein MutL (618 aa).

Residues 366 to 381 (AEPTAAREPATPRYSG) are compositionally biased toward low complexity. The interval 366–405 (AEPTAAREPATPRYSGGTSGGNGGRQSAGGWPHAQPGYQK) is disordered. Residues 382–392 (GTSGGNGGRQS) show a composition bias toward gly residues.

This sequence belongs to the DNA mismatch repair MutL/HexB family.

Functionally, this protein is involved in the repair of mismatches in DNA. It is required for dam-dependent methyl-directed DNA mismatch repair. May act as a 'molecular matchmaker', a protein that promotes the formation of a stable complex between two or more DNA-binding proteins in an ATP-dependent manner without itself being part of a final effector complex. The protein is DNA mismatch repair protein MutL of Salmonella agona (strain SL483).